The following is a 250-amino-acid chain: 2,3-bisphosphoglycerate-dependent phosphoglycerate mutase (250 aa).

Substrate contacts are provided by residues 10–17 (RHGESQWN), 23–24 (TG), Arg62, 89–92 (ERHY), Lys100, 116–117 (RR), and 185–186 (GN). His11 (tele-phosphohistidine intermediate) is an active-site residue. The Proton donor/acceptor role is filled by Glu89.

The protein belongs to the phosphoglycerate mutase family. BPG-dependent PGAM subfamily. In terms of assembly, homodimer.

It catalyses the reaction (2R)-2-phosphoglycerate = (2R)-3-phosphoglycerate. It functions in the pathway carbohydrate degradation; glycolysis; pyruvate from D-glyceraldehyde 3-phosphate: step 3/5. Its function is as follows. Catalyzes the interconversion of 2-phosphoglycerate and 3-phosphoglycerate. This chain is 2,3-bisphosphoglycerate-dependent phosphoglycerate mutase, found in Yersinia enterocolitica serotype O:8 / biotype 1B (strain NCTC 13174 / 8081).